The chain runs to 182 residues: SAGA-associated factor 11 homolog (182 aa).

The disordered stretch occupies residues 61-84; the sequence is GSGAAVEGEPEDSKPYTIVDQPDT. Residues 98-119 form an SGF11-type zinc finger; that stretch reads CHCPNCNRIVAASRFAPHLEKC. Residues 133–182 are disordered; the sequence is RIANTRDVGTGNYFGGDEDDEDDADWSGEKRKKKISQVRTNGSKKNGKTS. Acidic residues predominate over residues 148–158; sequence GDEDDEDDADW.

Belongs to the SGF11 family. As to quaternary structure, component of some SAGA transcription coactivator-HAT complexes. Within the SAGA complex, participates in a subcomplex of SAGA called the DUB module (deubiquitination module).

It localises to the nucleus. Its function is as follows. Component of the transcription regulatory histone acetylation (HAT) complex SAGA, a multiprotein complex that activates transcription by remodeling chromatin and mediating histone acetylation and deubiquitination. Within the SAGA complex, participates in a subcomplex that specifically deubiquitinates histone H2B. The SAGA complex is recruited to specific gene promoters by activators, where it is required for transcription. The polypeptide is SAGA-associated factor 11 homolog (Anopheles gambiae (African malaria mosquito)).